The following is a 485-amino-acid chain: Aspartyl/glutamyl-tRNA(Asn/Gln) amidotransferase subunit B (485 aa).

Belongs to the GatB/GatE family. GatB subfamily. Heterotrimer of A, B and C subunits.

The enzyme catalyses L-glutamyl-tRNA(Gln) + L-glutamine + ATP + H2O = L-glutaminyl-tRNA(Gln) + L-glutamate + ADP + phosphate + H(+). It carries out the reaction L-aspartyl-tRNA(Asn) + L-glutamine + ATP + H2O = L-asparaginyl-tRNA(Asn) + L-glutamate + ADP + phosphate + 2 H(+). Functionally, allows the formation of correctly charged Asn-tRNA(Asn) or Gln-tRNA(Gln) through the transamidation of misacylated Asp-tRNA(Asn) or Glu-tRNA(Gln) in organisms which lack either or both of asparaginyl-tRNA or glutaminyl-tRNA synthetases. The reaction takes place in the presence of glutamine and ATP through an activated phospho-Asp-tRNA(Asn) or phospho-Glu-tRNA(Gln). The chain is Aspartyl/glutamyl-tRNA(Asn/Gln) amidotransferase subunit B from Bordetella petrii (strain ATCC BAA-461 / DSM 12804 / CCUG 43448).